The following is a 108-amino-acid chain: Phosphocarrier protein HPr (108 aa).

The HPr domain occupies 21–108; the sequence is ELQATCIVKN…DAFSSGFGEL (88 aa). Histidine 35 acts as the Pros-phosphohistidine intermediate in catalysis.

Belongs to the HPr family.

It is found in the cytoplasm. General (non sugar-specific) component of the phosphoenolpyruvate-dependent sugar phosphotransferase system (sugar PTS). This major carbohydrate active-transport system catalyzes the phosphorylation of incoming sugar substrates concomitantly with their translocation across the cell membrane. The phosphoryl group from phosphoenolpyruvate (PEP) is transferred to the phosphoryl carrier protein HPr by enzyme I. Phospho-HPr then transfers it to the PTS EIIA domain. The chain is Phosphocarrier protein HPr (ptsH) from Chlamydia pneumoniae (Chlamydophila pneumoniae).